Consider the following 187-residue polypeptide: ECF RNA polymerase sigma factor SigW (187 aa).

A sigma-70 factor domain-2 region spans residues 3 to 95 (MMIKKRIKQV…RKKKPDYYLD (93 aa)). The Polymerase core binding signature appears at 47–50 (DIAQ). Residues 125–187 (ELSNTIQQKI…EALRKQLRDL (63 aa)) form a sigma-70 factor domain-4 region. The H-T-H motif DNA-binding region spans 166-184 (VGTVKTRIHRGREALRKQL).

Belongs to the sigma-70 factor family. ECF subfamily. As to quaternary structure, interacts transiently with the RNA polymerase catalytic core formed by RpoA, RpoB, RpoC and RpoZ (2 alpha, 1 beta, 1 beta' and 1 omega subunit) to form the RNA polymerase holoenzyme that can initiate transcription. Forms a heterodimer with cognate anti-sigma factor RsiW, which prevents it from binding to the -10 and -35 promoter elements.

Its activity is regulated as follows. Extracytoplasmic function (ECF) sigma factors are held in an inactive form by a cognate anti-sigma factor (RsiW for this protein) until released by regulated membrane proteolysis (RIP). RIP occurs when an extracytoplasmic signal (envelope stress) triggers a concerted proteolytic cascade to transmit information and elicit cellular responses. The anti-sigma factor RsiW is a membrane protein, binding sigma-W in the cytoplasm. RsiW is first cut extracytoplasmically (site-1 protease, S1P, by PrsW), then within the membrane itself (site-2 protease, S2P, by RasP), while cytoplasmic proteases (predominantly ClpX-ClpP) finish degrading the regulatory protein, liberating sigma-W. Sigma factors are initiation factors that promote the attachment of RNA polymerase (RNAP) to specific initiation sites and are then released. Sigma-W controls genes involved in response to cell envelope stress such as antimicrobial peptides, alkaline pH, transport processes and detoxification. In Bacillus subtilis (strain 168), this protein is ECF RNA polymerase sigma factor SigW (sigW).